Consider the following 431-residue polypeptide: Divalent metal cation transporter MntH (431 aa).

Helical transmembrane passes span 33 to 53 (LLKFLGPAFVVSVAYIDPGNF), 61 to 81 (SSFNYNLIWVILWSNLMAIFL), 110 to 130 (WIFWIVGELGAMATDLAEFIG), 141 to 161 (IPMIYAGLLTGVLTFIIVYME), 170 to 190 (TIIAALIAVICVAYTIELFLA), 211 to 231 (AVLIAVGMLGATVMPHVIYLH), 258 to 278 (ILIAMNIAFVVNAAMVIVSAA), 307 to 327 (GAFGIALLASGLSSSAVGTMA), 347 to 367 (IITMLPALIIIALGINPMRVL), 368 to 388 (VLSQVALSFILPFPIIQMLLI), and 406 to 426 (IVGFIIATMIILLNIILLYLT).

It belongs to the NRAMP family.

Its subcellular location is the cell membrane. In terms of biological role, h(+)-stimulated, divalent metal cation uptake system. This is Divalent metal cation transporter MntH from Clostridium acetobutylicum (strain ATCC 824 / DSM 792 / JCM 1419 / IAM 19013 / LMG 5710 / NBRC 13948 / NRRL B-527 / VKM B-1787 / 2291 / W).